The following is a 318-amino-acid chain: Beta-ketoacyl-[acyl-carrier-protein] synthase III (318 aa).

Catalysis depends on residues Cys-112 and His-245. Positions 246 to 250 (QANIR) are ACP-binding. Asn-275 is a catalytic residue.

The protein belongs to the thiolase-like superfamily. FabH family. In terms of assembly, homodimer.

The protein resides in the cytoplasm. It catalyses the reaction malonyl-[ACP] + acetyl-CoA + H(+) = 3-oxobutanoyl-[ACP] + CO2 + CoA. It functions in the pathway lipid metabolism; fatty acid biosynthesis. Functionally, catalyzes the condensation reaction of fatty acid synthesis by the addition to an acyl acceptor of two carbons from malonyl-ACP. Catalyzes the first condensation reaction which initiates fatty acid synthesis and may therefore play a role in governing the total rate of fatty acid production. Possesses both acetoacetyl-ACP synthase and acetyl transacylase activities. Its substrate specificity determines the biosynthesis of branched-chain and/or straight-chain of fatty acids. This Rickettsia conorii (strain ATCC VR-613 / Malish 7) protein is Beta-ketoacyl-[acyl-carrier-protein] synthase III.